We begin with the raw amino-acid sequence, 166 residues long: Large ribosomal subunit protein uL10 (166 aa).

This sequence belongs to the universal ribosomal protein uL10 family. Part of the ribosomal stalk of the 50S ribosomal subunit. The N-terminus interacts with L11 and the large rRNA to form the base of the stalk. The C-terminus forms an elongated spine to which L12 dimers bind in a sequential fashion forming a multimeric L10(L12)X complex.

Forms part of the ribosomal stalk, playing a central role in the interaction of the ribosome with GTP-bound translation factors. The protein is Large ribosomal subunit protein uL10 of Streptococcus agalactiae serotype III (strain NEM316).